We begin with the raw amino-acid sequence, 393 residues long: Formate-dependent phosphoribosylglycinamide formyltransferase (393 aa).

Residues 22-23 (EL) and E82 contribute to the N(1)-(5-phospho-beta-D-ribosyl)glycinamide site. ATP contacts are provided by residues R114, K155, 160–165 (SSGKGQ), 195–198 (EGFI), and E203. An ATP-grasp domain is found at 119–308 (RLAAEELDLP…QFALHARAIL (190 aa)). Mg(2+)-binding residues include E267 and E279. Residues D286, K356, and 363–364 (RR) contribute to the N(1)-(5-phospho-beta-D-ribosyl)glycinamide site.

It belongs to the PurK/PurT family. As to quaternary structure, homodimer.

The enzyme catalyses N(1)-(5-phospho-beta-D-ribosyl)glycinamide + formate + ATP = N(2)-formyl-N(1)-(5-phospho-beta-D-ribosyl)glycinamide + ADP + phosphate + H(+). Its pathway is purine metabolism; IMP biosynthesis via de novo pathway; N(2)-formyl-N(1)-(5-phospho-D-ribosyl)glycinamide from N(1)-(5-phospho-D-ribosyl)glycinamide (formate route): step 1/1. Functionally, involved in the de novo purine biosynthesis. Catalyzes the transfer of formate to 5-phospho-ribosyl-glycinamide (GAR), producing 5-phospho-ribosyl-N-formylglycinamide (FGAR). Formate is provided by PurU via hydrolysis of 10-formyl-tetrahydrofolate. This is Formate-dependent phosphoribosylglycinamide formyltransferase from Pseudomonas entomophila (strain L48).